The chain runs to 991 residues: UPF0182 protein RHA1_ro08670 (991 aa).

Transmembrane regions (helical) follow at residues 16 to 36 (VMIM…RLVV), 61 to 81 (LILF…AVVW), 115 to 135 (FTVG…QASW), 170 to 190 (LILA…LGTH), 214 to 234 (VQLA…YWLD), 263 to 283 (RLIM…AIAV), and 291 to 311 (MATA…PALI). Residues 902 to 940 (TGAVATAPGGDATTPPPTGGQPPAPPPPGAPPAPPPATS) form a disordered region. Over residues 903–914 (GAVATAPGGDAT) the composition is skewed to low complexity. A compositionally biased stretch (pro residues) spans 915–938 (TPPPTGGQPPAPPPPGAPPAPPPA).

This sequence belongs to the UPF0182 family.

The protein resides in the cell membrane. The sequence is that of UPF0182 protein RHA1_ro08670 from Rhodococcus jostii (strain RHA1).